A 541-amino-acid chain; its full sequence is MEKSSYFLFGGTNFNKKKFAPDFAKFKNSTEDDDSNKKVNFFVEEEEDTEQPEAEKVIVSSKKRKRRSSNSVPVEGFDVFKSSKKARAKGKAEEQITKNEIVENPKKELNRQMERDALSRKQYSIHVSGNNIPPPLKSFAELSSRYGCEGYILRNLAELGFKEPTPIQRQAIPILLSGRECFACAPTGSGKTFAFICPMLIKLKRPSTDGIRAVILSPARELAAQTAREGKKLIKGSNFHIRLMTKPLVKTADFSKLWCDVLISTPMRLKRAIKAKKIDLSKVEYLVLDESDKLFEQSLLKQIDCVVKACSNPSIIRSLFSATLPDSVEELARSIMHDAVRVIIGRKNTASETVKQKLVFAGSEEGKLLALRQSFAESLNPPVLIFVQSKERAKELYDELKCENIRAGVIHSDLPPGERENAVDQFRAGEKWVLIATDVIARGMDFKGINCVINYDFPDSASAYIHRIGRSGRAGRSGEAITFYTEQDVPFLRNIANTMMSSGCEVPSWIMSLKKKKWRKHRPRRDSISTKPKADKNDTDE.

Acidic residues predominate over residues 43–52 (VEEEEDTEQP). The interval 43-72 (VEEEEDTEQPEAEKVIVSSKKRKRRSSNSV) is disordered. Positions 141-169 (ELSSRYGCEGYILRNLAELGFKEPTPIQR) match the Q motif motif. The region spanning 172–342 (IPILLSGREC…RSIMHDAVRV (171 aa)) is the Helicase ATP-binding domain. Position 185 to 192 (185 to 192 (APTGSGKT)) interacts with ATP. Residues 289–292 (DESD) carry the DEAD box motif. In terms of domain architecture, Helicase C-terminal spans 370–514 (ALRQSFAESL…EVPSWIMSLK (145 aa)). Residues 517-541 (KWRKHRPRRDSISTKPKADKNDTDE) are disordered. Positions 525–541 (RDSISTKPKADKNDTDE) are enriched in basic and acidic residues.

It belongs to the DEAD box helicase family. DDX52/ROK1 subfamily.

The enzyme catalyses ATP + H2O = ADP + phosphate + H(+). The sequence is that of DEAD-box ATP-dependent RNA helicase 57 (RH57) from Arabidopsis thaliana (Mouse-ear cress).